A 617-amino-acid polypeptide reads, in one-letter code: MWTAWCVAALSVAAVCGIRQDTTTVLRVTKDVLGDAISGTIQKSDAFRSALREVPVGVGGVPYNDFHVREPPPKYTNGRQLGGNYKYGHIEANDNTAQLGGKYRYGEILDSDGSLRDLRHEDYRPSDSAYHRGPGRYRSAADPSSAGRLHRRELRPGEIPAGVATGALGPGGLLGTGGILANEGILAGQGGLLGGGGLLGDGGLLGGGGVLGVLGEGGILSTVQGITGLRIVELTLPRVSVRLLPGVGVYLSLYTRVAINGKSLIGFLDIAVEVNITAKVRLTMDRTGYPRLVIERCDTLLGGIKVKLLRGLLPNLVDNLVNRVLANVLPDLLCPIVDVVLGLVNDQLGLVDSLVPLGILGSVQYTFSSLPLVTGEFLELDLNTLVGEAGGDLIDYPLGRPAMLPRPQMPELPPMGDNTNSQLAISANFLSSVLTMLQKQGALDIDITDGMFEDLPPLTTSTLGALIPKVFQQYPESRPLTIRIQVPNPPTVTLQKDKALVKVFATSEVVVSQPNDVETTICLIDVDTDLLASFSVEGDKLMIDAKLDKTSLNLRTSNVGNFDVFILEMLVEKIFDLAFMPAMNAILGSGVPLPKILNIDFSNADIDVLEDLLVLST.

The signal sequence occupies residues 1–17 (MWTAWCVAALSVAAVCG). The segment at 124 to 149 (RPSDSAYHRGPGRYRSAADPSSAGRL) is disordered. The N-linked (GlcNAc...) asparagine glycan is linked to Asn-275. An intrachain disulfide couples Cys-297 to Cys-334.

Belongs to the BPI/LBP/Plunc superfamily. BPI/LBP family. In terms of tissue distribution, highly expressed in olfactory mucosa but undetectable in thymus, kidney, lung, brain, spleen and liver.

It localises to the secreted. Its subcellular location is the cytoplasm. Functionally, may have the capacity to recognize and bind specific classes of odorants. May act as a carrier molecule, transporting odorants across the mucus layer to access receptor sites. May serve as a primary defense mechanism by recognizing and removing potentially harmful odorants or pathogenic microorganisms from the mucosa or clearing excess odorant from mucus to enable new odorant stimuli to be received. The sequence is that of BPI fold-containing family B member 4 (Bpifb4) from Rattus norvegicus (Rat).